We begin with the raw amino-acid sequence, 506 residues long: MASQQAPAKDLQTNNLEFTPTDSSGVQWAEDISNSPSAQLNFSPSNNGCWATQELQSLWKMFNSWLQPEKQTKEQMISQLVLEQFLLTGHCKDKYALTEKWKASGSDMRRFMESLTDECLKPPVMVHVSMQGQEALFSENMPLKEVIKLLKQQQSATRPTPDNEQMPVDTTQDRLLATGQENSENECNNSCNATEANVGESCSGNEMDSLLIIQKEQHPEHEEGNVVCQFPHGARRASQGTPSHHVDFPSAPTTADVPMEEQPKDLSRENISEDKNNCYNTSRNAATQVYSGDNIPRNKSDSLFINKRIYHPEPEVGDIPYGVPQDSTRASQGTSTCLQESLGECFSENDPREVPGLQSRQEQPISDPVLLGKNHEANLPCESHQKRFCRDAKLYKCEECSRMFKHARSLSSHQRTHLNKKSELLCVTCQKMFKRVSDRRTHEIIHMPEKPFKCSTCEKSFSHKTNLKSHEMIHTGEMPYVCSLCSRRFRQSSTYHRHLRNYHRSD.

Residues 1–24 are disordered; it reads MASQQAPAKDLQTNNLEFTPTDSS. An SCAN box domain is found at 37 to 119; it reads SAQLNFSPSN…RFMESLTDEC (83 aa). 4 consecutive C2H2-type zinc fingers follow at residues 395–417, 424–446, 452–474, and 480–503; these read YKCEECSRMFKHARSLSSHQRTH, LLCVTCQKMFKRVSDRRTHEIIH, FKCSTCEKSFSHKTNLKSHEMIH, and YVCSLCSRRFRQSSTYHRHLRNYH.

As to expression, embryonic stem (ES) cell-specific. Expressed in only 5% of ES cells at a given time, but nearly all ES cells express it at least once during 9 passages.

Its subcellular location is the nucleus. It is found in the chromosome. The protein localises to the telomere. Functionally, embryonic stem (ES) cell-specific transcription factor required to regulate ES cell pluripotency. Binds telomeres and plays a key role in genomic stability in ES cells by regulating telomere elongation. Acts as an activator of spontaneous telomere sister chromatid exchange (T-SCE) and telomere elongation in undifferentiated ES cells. This Mus musculus (Mouse) protein is Zinc finger and SCAN domain containing protein 4C (Zscan4c).